Consider the following 299-residue polypeptide: N-acetylmuramic acid 6-phosphate etherase (299 aa).

One can recognise an SIS domain in the interval 57–220 (ISAAFHKKGR…TTGAMIRTGK (164 aa)). The active-site Proton donor is the glutamate 85. Glutamate 116 is a catalytic residue.

The protein belongs to the GCKR-like family. MurNAc-6-P etherase subfamily. Homodimer.

It carries out the reaction N-acetyl-D-muramate 6-phosphate + H2O = N-acetyl-D-glucosamine 6-phosphate + (R)-lactate. It functions in the pathway amino-sugar metabolism; 1,6-anhydro-N-acetylmuramate degradation. It participates in amino-sugar metabolism; N-acetylmuramate degradation. The protein operates within cell wall biogenesis; peptidoglycan recycling. Its function is as follows. Specifically catalyzes the cleavage of the D-lactyl ether substituent of MurNAc 6-phosphate, producing GlcNAc 6-phosphate and D-lactate. Together with AnmK, is also required for the utilization of anhydro-N-acetylmuramic acid (anhMurNAc) either imported from the medium or derived from its own cell wall murein, and thus plays a role in cell wall recycling. In Psychromonas ingrahamii (strain DSM 17664 / CCUG 51855 / 37), this protein is N-acetylmuramic acid 6-phosphate etherase.